The following is a 510-amino-acid chain: NAD(P)H-quinone oxidoreductase subunit 2 A, chloroplastic (510 aa).

The next 13 membrane-spanning stretches (helical) occupy residues 24–44 (LLLFDGSLIFPECILIFGLIL), 57–77 (IPWLYFISSTSLVMSITALLF), 99–119 (IFQFLILLCSTLCIPLSVEYI), 124–144 (MAITEFLLFVLTATLGGMFLC), 149–169 (LITIFVAPECFSLCSYLLSGY), 183–203 (YLLMGGASSSILVHGFSWLYG), 227–247 (PGISIALIFITVGIGFKLSPA), 295–315 (WHLLLEILAILSMILGNLIAI), 323–343 (MLAYSSIGQIGYVIIGIIVGD), 354–374 (YMLFYISMNLGTFACIVLFGL), 395–415 (ALSLALCLLSLGGLPPLAGFF), 418–438 (LYLFWCGWQAGLYFLVLIGLL), and 484–504 (MIVCVIASTIPGISMNPIIAI).

This sequence belongs to the complex I subunit 2 family. In terms of assembly, NDH is composed of at least 16 different subunits, 5 of which are encoded in the nucleus.

It localises to the plastid. The protein resides in the chloroplast thylakoid membrane. It catalyses the reaction a plastoquinone + NADH + (n+1) H(+)(in) = a plastoquinol + NAD(+) + n H(+)(out). The catalysed reaction is a plastoquinone + NADPH + (n+1) H(+)(in) = a plastoquinol + NADP(+) + n H(+)(out). NDH shuttles electrons from NAD(P)H:plastoquinone, via FMN and iron-sulfur (Fe-S) centers, to quinones in the photosynthetic chain and possibly in a chloroplast respiratory chain. The immediate electron acceptor for the enzyme in this species is believed to be plastoquinone. Couples the redox reaction to proton translocation, and thus conserves the redox energy in a proton gradient. This chain is NAD(P)H-quinone oxidoreductase subunit 2 A, chloroplastic, found in Solanum bulbocastanum (Wild potato).